The primary structure comprises 349 residues: KH domain-containing, RNA-binding, signal transduction-associated protein 2 (349 aa).

The KH domain occupies 65-135 (LIPVKQYPKF…HLSDELHVLI (71 aa)). Disordered stretches follow at residues 182–284 (EDSG…DDQT) and 319–349 (PEEW…YGRY). 2 positions are modified to omega-N-methylarginine: Arg-230 and Arg-240. A compositionally biased stretch (basic and acidic residues) spans 340-349 (GYREHPYGRY).

The protein belongs to the KHDRBS family. In terms of assembly, self-associates to form homooligomers. Interacts with KHDRBS1/SAM68; heterooligomer formation of KHDRBS family proteins may modulate RNA substrate specificity. Interacts with RBMX. Interacts with SAFB, SFRS9 and YTHDC1. Interacts with FYN and PLCG1 (via SH3 domain). Interacts (phosphorylated) with FYN, GRB2, PLCG1 and RASA1 (via SH2 domain). Methylated. Post-translationally, tyrosine phosphorylated by FYN, PTK6 and SRC. Tyrosine phosphorylated by SRC during mitosis. In terms of tissue distribution, highly expressed in brain, lung, kidney and small intestine. Weakly expressed in placenta, liver, spleen, thymus, ovary and colon.

The protein resides in the nucleus. In terms of biological role, RNA-binding protein that plays a role in the regulation of alternative splicing and influences mRNA splice site selection and exon inclusion. Binds both poly(A) and poly(U) homopolymers. Phosphorylation by PTK6 inhibits its RNA-binding ability. Induces an increased concentration-dependent incorporation of exon in CD44 pre-mRNA by direct binding to purine-rich exonic enhancer. Can regulate alternative splicing of NRXN1 in the laminin G-like domain 6 containing the evolutionary conserved neurexin alternative spliced segment 4 (AS4) involved in neurexin selective targeting to postsynaptic partners. Regulates cell-type specific alternative splicing of NRXN1 at AS4 and acts synergystically with SAM68 in exon skipping. In contrast acts antagonistically with SAM68 in NRXN3 exon skipping at AS4. Its phosphorylation by FYN inhibits its ability to regulate splice site selection. May function as an adapter protein for Src kinases during mitosis. In Homo sapiens (Human), this protein is KH domain-containing, RNA-binding, signal transduction-associated protein 2 (KHDRBS2).